The following is a 186-amino-acid chain: Peptide deformylase (186 aa).

C113 and H156 together coordinate Fe cation. Residue E157 is part of the active site. H160 serves as a coordination point for Fe cation.

This sequence belongs to the polypeptide deformylase family. Requires Fe(2+) as cofactor.

The catalysed reaction is N-terminal N-formyl-L-methionyl-[peptide] + H2O = N-terminal L-methionyl-[peptide] + formate. Its function is as follows. Removes the formyl group from the N-terminal Met of newly synthesized proteins. Requires at least a dipeptide for an efficient rate of reaction. N-terminal L-methionine is a prerequisite for activity but the enzyme has broad specificity at other positions. This Levilactobacillus brevis (strain ATCC 367 / BCRC 12310 / CIP 105137 / JCM 1170 / LMG 11437 / NCIMB 947 / NCTC 947) (Lactobacillus brevis) protein is Peptide deformylase.